We begin with the raw amino-acid sequence, 395 residues long: Succinate--CoA ligase [ADP-forming] subunit beta (395 aa).

In terms of domain architecture, ATP-grasp spans 9 to 240 (RDVFEKHGVP…AASADPLEAK (232 aa)). Residues Lys49, 56 to 58 (GRG), Ala98, and Glu103 contribute to the ATP site. Residues Asn195 and Asp209 each contribute to the Mg(2+) site. Substrate-binding positions include Asn260 and 322–324 (GIT).

It belongs to the succinate/malate CoA ligase beta subunit family. In terms of assembly, heterotetramer of two alpha and two beta subunits. The cofactor is Mg(2+).

It catalyses the reaction succinate + ATP + CoA = succinyl-CoA + ADP + phosphate. The catalysed reaction is GTP + succinate + CoA = succinyl-CoA + GDP + phosphate. Its pathway is carbohydrate metabolism; tricarboxylic acid cycle; succinate from succinyl-CoA (ligase route): step 1/1. In terms of biological role, succinyl-CoA synthetase functions in the citric acid cycle (TCA), coupling the hydrolysis of succinyl-CoA to the synthesis of either ATP or GTP and thus represents the only step of substrate-level phosphorylation in the TCA. The beta subunit provides nucleotide specificity of the enzyme and binds the substrate succinate, while the binding sites for coenzyme A and phosphate are found in the alpha subunit. The protein is Succinate--CoA ligase [ADP-forming] subunit beta of Beutenbergia cavernae (strain ATCC BAA-8 / DSM 12333 / CCUG 43141 / JCM 11478 / NBRC 16432 / NCIMB 13614 / HKI 0122).